The primary structure comprises 556 residues: Phenylalanine--tRNA ligase beta subunit (556 aa).

The region spanning 278–353 (LTPKRFEVEL…IAYGYNNIEP (76 aa)) is the B5 domain. Mg(2+) contacts are provided by D331, D337, E340, and D341.

It belongs to the phenylalanyl-tRNA synthetase beta subunit family. Type 2 subfamily. As to quaternary structure, tetramer of two alpha and two beta subunits. Mg(2+) is required as a cofactor.

The protein localises to the cytoplasm. It catalyses the reaction tRNA(Phe) + L-phenylalanine + ATP = L-phenylalanyl-tRNA(Phe) + AMP + diphosphate + H(+). In Pyrococcus abyssi (strain GE5 / Orsay), this protein is Phenylalanine--tRNA ligase beta subunit.